Consider the following 697-residue polypeptide: Elongation factor G 1 (697 aa).

The tr-type G domain maps to 8-283 (ERYRNFGIMA…AVVDFLPSPV (276 aa)). GTP-binding positions include 17-24 (AHIDAGKT), 81-85 (DTPGH), and 135-138 (NKMD).

It belongs to the TRAFAC class translation factor GTPase superfamily. Classic translation factor GTPase family. EF-G/EF-2 subfamily.

The protein resides in the cytoplasm. Functionally, catalyzes the GTP-dependent ribosomal translocation step during translation elongation. During this step, the ribosome changes from the pre-translocational (PRE) to the post-translocational (POST) state as the newly formed A-site-bound peptidyl-tRNA and P-site-bound deacylated tRNA move to the P and E sites, respectively. Catalyzes the coordinated movement of the two tRNA molecules, the mRNA and conformational changes in the ribosome. This Anaeromyxobacter dehalogenans (strain 2CP-C) protein is Elongation factor G 1.